A 640-amino-acid chain; its full sequence is Threonine--tRNA ligase (640 aa).

Residues 1–61 (MPVITLPDGS…SNDATLQIIT (61 aa)) enclose the TGS domain. Positions 242-533 (DHRKIGKQLD…LIEHYAGVFP (292 aa)) are catalytic. The Zn(2+) site is built by cysteine 333, histidine 384, and histidine 510.

This sequence belongs to the class-II aminoacyl-tRNA synthetase family. As to quaternary structure, homodimer. The cofactor is Zn(2+).

It localises to the cytoplasm. It carries out the reaction tRNA(Thr) + L-threonine + ATP = L-threonyl-tRNA(Thr) + AMP + diphosphate + H(+). Catalyzes the attachment of threonine to tRNA(Thr) in a two-step reaction: L-threonine is first activated by ATP to form Thr-AMP and then transferred to the acceptor end of tRNA(Thr). Also edits incorrectly charged L-seryl-tRNA(Thr). The chain is Threonine--tRNA ligase from Pseudomonas putida (strain GB-1).